We begin with the raw amino-acid sequence, 188 residues long: Preprocaerulein type-1 (188 aa).

Residues 1 to 26 form the signal peptide; that stretch reads MFKGILLCVLFAVLSANPLSQPEGFA. Residues 27–170 constitute a propeptide that is removed on maturation; that stretch reads DEERDVRGLA…ANDERRFADG (144 aa). The segment at 152–188 is disordered; that stretch reads LGGSPQQREANDERRFADGQQDYTGWMDFGRRNGEDD. Position 174 is a sulfotyrosine (Y174). F180 bears the Phenylalanine amide mark. The propeptide occupies 184–188; that stretch reads NGEDD.

The protein belongs to the gastrin/cholecystokinin family. In terms of tissue distribution, expressed by the skin glands.

The protein resides in the secreted. Its function is as follows. The pharmacological activities of caerulein are quite similar to the physiological activities of gastrin and related peptides. The chain is Preprocaerulein type-1 from Xenopus laevis (African clawed frog).